The primary structure comprises 246 residues: Nodulation protein G (246 aa).

Residue 8–32 (VTGAMGGLGTAICQALAKDGCIVAA) participates in NAD(+) binding. S140 lines the substrate pocket. Residue Y153 is the Proton acceptor of the active site.

It belongs to the short-chain dehydrogenases/reductases (SDR) family.

Functionally, proposed to modify Nod factor fatty acyl chain. The protein is Nodulation protein G (nodG) of Azospirillum brasilense.